The sequence spans 236 residues: Small ribosomal subunit protein uS2c (236 aa).

Belongs to the universal ribosomal protein uS2 family.

Its subcellular location is the plastid. It localises to the chloroplast. The chain is Small ribosomal subunit protein uS2c (rps2) from Lemna minor (Common duckweed).